The following is an 875-amino-acid chain: Probable inorganic carbon transporter subunit DabA (875 aa).

The Zn(2+) site is built by Cys399, Asp401, His581, and Cys596.

Belongs to the inorganic carbon transporter (TC 9.A.2) DabA family. In terms of assembly, forms a complex with DabB. The cofactor is Zn(2+).

It localises to the cell membrane. In terms of biological role, part of an energy-coupled inorganic carbon pump. In Bacillus thuringiensis (strain Al Hakam), this protein is Probable inorganic carbon transporter subunit DabA.